Consider the following 130-residue polypeptide: Small ribosomal subunit protein uS8 (130 aa).

Belongs to the universal ribosomal protein uS8 family. Part of the 30S ribosomal subunit. Contacts proteins S5 and S12.

Functionally, one of the primary rRNA binding proteins, it binds directly to 16S rRNA central domain where it helps coordinate assembly of the platform of the 30S subunit. This is Small ribosomal subunit protein uS8 from Pasteurella multocida (strain Pm70).